The primary structure comprises 383 residues: Protein FAM217B (383 aa).

Disordered regions lie at residues 1-70 (MNAG…CQGA), 89-115 (ADED…PPDL), 200-222 (KAKG…KSPG), 232-251 (SKPL…RKKA), 284-325 (QTLE…HIRV), and 338-383 (SCKA…YKLK). Residues 8-43 (NKVQHSKNSSGKRQSKSQVPHASSQPRSSLTAVTQP) are compositionally biased toward polar residues. Residues 44 to 56 (TEEKLKESISPEA) show a composition bias toward basic and acidic residues. The segment covering 374–383 (GVKQNTYKLK) has biased composition (polar residues).

It belongs to the FAM217 family.

This Homo sapiens (Human) protein is Protein FAM217B (FAM217B).